The following is a 242-amino-acid chain: Glutamate transport ATP-binding protein GluA (242 aa).

In terms of domain architecture, ABC transporter spans 2-236 (IKMTGVQKYF…PKSDRAKDFL (235 aa)). 34 to 41 (GPSGSGKS) is a binding site for ATP.

It belongs to the ABC transporter superfamily. The complex is composed of two ATP-binding proteins (GluA), two transmembrane proteins (GluC and GluD) and a solute-binding protein (GluB).

It localises to the cell membrane. It carries out the reaction a polar amino acid(out) + ATP + H2O = a polar amino acid(in) + ADP + phosphate + H(+). The enzyme catalyses L-glutamate(out) + ATP + H2O = L-glutamate(in) + ADP + phosphate + H(+). Its function is as follows. Part of the ABC transporter complex GluABCD involved in glutamate uptake. Probably responsible for energy coupling to the transport system. The chain is Glutamate transport ATP-binding protein GluA from Corynebacterium glutamicum (strain ATCC 13032 / DSM 20300 / JCM 1318 / BCRC 11384 / CCUG 27702 / LMG 3730 / NBRC 12168 / NCIMB 10025 / NRRL B-2784 / 534).